We begin with the raw amino-acid sequence, 85 residues long: UPF0297 protein CLL_A1175 (85 aa).

The protein belongs to the UPF0297 family.

This is UPF0297 protein CLL_A1175 from Clostridium botulinum (strain Eklund 17B / Type B).